A 499-amino-acid chain; its full sequence is Fumarate hydratase 2 (499 aa).

The tract at residues 19–51 (ADVTLKQEDEQQERRSYSTPFREERDTFGPIQV) is disordered. Residues 23-45 (LKQEDEQQERRSYSTPFREERDT) are compositionally biased toward basic and acidic residues. Substrate-binding positions include 134–136 (SGT), 164–167 (HPND), 174–176 (SSN), and Thr222. The active-site Proton donor/acceptor is the His223. Residue Ser353 is part of the active site. Substrate-binding positions include Ser354 and 359 to 361 (KVN).

It belongs to the class-II fumarase/aspartase family. Fumarase subfamily. Homotetramer.

The protein resides in the cytoplasm. Its subcellular location is the cytosol. It carries out the reaction (S)-malate = fumarate + H2O. Fumarate hydratase activity (fumarate to L-malate) is strongly inhibited by phosphoenolpyruvate, citrate, oxaloacetate, ATP and ADP. Malate dehydratase activity (malate to fumarate) is activated by oxaloacetate, Asn and Gln. Malate dehydratase activity (malate to fumarate) is inhibited by citrate, succinate, ADP and ATP. In terms of biological role, cytosolic fumarate hydratase that catalyzes the reversible stereospecific interconversion of fumarate to L-malate. Catalyzes the dehydration of L-malate to fumarate in the cytosol: required for the massive fumarate accumulation during the day in plants grown under high nitrogen. Also required for acclimation of photosynthesis to cold: acts by mediating accumulation of fumarate at low temperature, leading to reduce accumulation of phosphorylated sugars. The protein is Fumarate hydratase 2 of Arabidopsis thaliana (Mouse-ear cress).